A 1380-amino-acid polypeptide reads, in one-letter code: Tripeptidyl-peptidase 2 (1380 aa).

Residues 110 to 619 (STFIASLMPK…QGLMQVDKAY (510 aa)) enclose the Peptidase S8 domain. Residues D145, H372, and S558 each act as charge relay system in the active site. The disordered stretch occupies residues 1099 to 1143 (DEKEGKNPKDNPVSYPISYVVPPNKPEEDKKAASAPTCSKSVSER). Over residues 1110–1120 (PVSYPISYVVP) the composition is skewed to low complexity. 2 coiled-coil regions span residues 1152-1181 (KIKF…KSEY) and 1238-1300 (EDDE…ELTK).

Belongs to the peptidase S8 family. In terms of assembly, assembles into a large oligomeric complex containing two related proteins 153 and 142 kDa that are derived from the single TPP2 gene. The 142 kDa form mainly differs from the 153 kDa form by a truncation at the C-terminal end.

It carries out the reaction Release of an N-terminal tripeptide from a polypeptide.. Inhibited by alanine-alanine-phenylalanine-chloromethylketone, butabindide and phenylmethanesulfonyl fluoride (PMSF), but not by leupeptin, N-ethylmaleimide, EDTA, MG132 and lactacystin. In terms of biological role, serine protease of the proteasome pathway that may function with the 20S proteasome to degrade oxidized proteins generated by environmental stress. The chain is Tripeptidyl-peptidase 2 (TPP2) from Arabidopsis thaliana (Mouse-ear cress).